The following is a 740-amino-acid chain: NAD(P)H-quinone oxidoreductase subunit 5, chloroplastic (740 aa).

Transmembrane regions (helical) follow at residues 9–29 (WIIP…LLLF), 40–60 (WSFL…YLSI), 89–109 (IDPL…LVLI), 125–145 (FAYM…SNLI), 147–167 (IYFF…FWFT), 185–205 (GDFG…SFEF), 221–241 (VNLL…IAKS), 258–278 (TPIS…FLVA), 283–303 (LFIV…ITIL), 327–347 (LGYM…FHLI), 354–374 (ALLF…VGYS), 396–416 (TAFL…CFWS), 425–445 (LLFS…TAFY), 547–567 (ILFP…IGIP), 606–626 (FSVS…KPFY), and 718–738 (ISSY…FLKI).

The protein belongs to the complex I subunit 5 family. NDH is composed of at least 16 different subunits, 5 of which are encoded in the nucleus.

Its subcellular location is the plastid. The protein resides in the chloroplast thylakoid membrane. It carries out the reaction a plastoquinone + NADH + (n+1) H(+)(in) = a plastoquinol + NAD(+) + n H(+)(out). The enzyme catalyses a plastoquinone + NADPH + (n+1) H(+)(in) = a plastoquinol + NADP(+) + n H(+)(out). Its function is as follows. NDH shuttles electrons from NAD(P)H:plastoquinone, via FMN and iron-sulfur (Fe-S) centers, to quinones in the photosynthetic chain and possibly in a chloroplast respiratory chain. The immediate electron acceptor for the enzyme in this species is believed to be plastoquinone. Couples the redox reaction to proton translocation, and thus conserves the redox energy in a proton gradient. The sequence is that of NAD(P)H-quinone oxidoreductase subunit 5, chloroplastic (ndhF) from Aethionema cordifolium (Lebanon stonecress).